The sequence spans 810 residues: Protein 4.1 (810 aa).

A disordered region spans residues 1–124 (MTTEKSLVAE…KEIEFGTSLD (124 aa)). S14 carries the phosphoserine modification. T61 is subject to Phosphothreonine. The span at 62-76 (PTHEDLTKNKERTSE) shows a compositional bias: basic and acidic residues. Residues S85, S86, S96, S105, S122, S150, S152, S153, S189, and S192 each carry the phosphoserine modification. Residues 102–118 (DVESAKEKCEGGQKEIE) are compositionally biased toward basic and acidic residues. A disordered region spans residues 152 to 203 (SSAETQPAQEEHREDPDFETKEGGGLEECSKIEVKEESPESKAERELKASQK). Residues 160 to 200 (QEEHREDPDFETKEGGGLEECSKIEVKEESPESKAERELKA) are compositionally biased toward basic and acidic residues. The 282-residue stretch at 211–492 (MHCKVSLLDD…EHHTFFRLTS (282 aa)) folds into the FERM domain. Y223 carries the post-translational modification Phosphotyrosine. T379 carries the post-translational modification Phosphothreonine. A disordered region spans residues 518–613 (TRQASALIDR…DQAEPEPTEV (96 aa)). A phosphoserine mark is found at S522, S541, S543, and S555. Over residues 587 to 601 (AQKETVKDEEKKEEG) the composition is skewed to basic and acidic residues. The spectrin--actin-binding stretch occupies residues 615–659 (KDLDKSQEEIKKHHASISELKKNFMESVPEPRPSEWDKRLSTHSP). 4 positions are modified to phosphoserine: S620, S630, S655, and S658. Residues 660 to 810 (FRTLNINGQL…VHQETEISEE (151 aa)) are C-terminal (CTD). T682 and T805 each carry phosphothreonine.

Binds with a high affinity to glycophorin and with lower affinity to band III protein. Associates with the nuclear mitotic apparatus. Binds calmodulin, CPAP and DLG1. Also found to associate with contractile apparatus and tight junctions. Interacts with NUMA1; this interaction is negatively regulated by CDK1 during metaphase and promotes for anaphase-specific localization of NUMA1 in symmetrically dividing cells. Interacts with ATP2B1; regulates small intestinal calcium absorption through regulation of membrane expression of ATP2B1. O-glycosylated; contains N-acetylglucosamine side chains in the C-terminal domain. Post-translationally, phosphorylated at multiple sites by different protein kinases and each phosphorylation event selectively modulates the protein's functions.

Its subcellular location is the nucleus. It is found in the cytoplasm. It localises to the cytoskeleton. The protein resides in the cell cortex. In terms of biological role, protein 4.1 is a major structural element of the erythrocyte membrane skeleton. It plays a key role in regulating membrane physical properties of mechanical stability and deformability by stabilizing spectrin-actin interaction. Recruits DLG1 to membranes. Required for dynein-dynactin complex and NUMA1 recruitment at the mitotic cell cortex during anaphase. This is Protein 4.1 from Canis lupus familiaris (Dog).